The sequence spans 860 residues: Photoactivated adenylate cyclase subunit beta (860 aa).

The region spanning 56–149 (LRRLMYLSKS…GRMYGDWHMK (94 aa)) is the BLUF 1 domain. One can recognise a Guanylate cyclase 1 domain in the interval 205–333 (VVTFIYLVEF…DCINTTSRIA (129 aa)). Positions 420–443 (RPPIFDDTPKGKPRPRTPGYGGRQ) are disordered. Residues 471–563 (LTTLTYISQA…RAYPAEWTLT (93 aa)) form the BLUF 2 domain. The Guanylate cyclase 2 domain maps to 619–748 (VMLATDICSF…AVSARVMEVE (130 aa)). Residues 819–860 (KPLALEPEEAKQDYRVSPGRMRHGDSGRRSNSAQGKRSTQVR) are disordered. Residues 847 to 860 (RSNSAQGKRSTQVR) are compositionally biased toward polar residues.

This sequence belongs to the adenylyl cyclase class-4/guanylyl cyclase family. As to quaternary structure, heterotetramer of two alpha and two beta subunits. It depends on FAD as a cofactor.

It localises to the cell projection. The protein localises to the cilium. Its subcellular location is the flagellum. It catalyses the reaction ATP = 3',5'-cyclic AMP + diphosphate. In terms of biological role, acts as a photoreceptor for the step-up photophobic response. This Euglena longa (Euglenophycean alga) protein is Photoactivated adenylate cyclase subunit beta.